The following is a 493-amino-acid chain: Malonyl-CoA decarboxylase, mitochondrial (493 aa).

Residues 1-39 (MRGFGPGLTARRLLPLRLPPRPPGPRLASGQAAGALERA) constitute a mitochondrion transit peptide. Residues 40-190 (MDELLRRAVP…VLKGMLSEWF (151 aa)) form an alpha-helical domain region. Lysine 59 carries the N6-acetyllysine modification. Lysine 168 is subject to N6-acetyllysine; alternate. Lysine 168 is modified (N6-succinyllysine; alternate). A catalytic domain region spans residues 191–493 (SSGFLNLERV…VAQFQKNSKL (303 aa)). An N6-acetyllysine modification is found at lysine 211. N6-succinyllysine is present on lysine 222. Malonyl-CoA is bound by residues 299–305 (QGVELGT) and serine 329. Serine 329 acts as the Proton acceptor in catalysis. Lysine 389 carries the N6-acetyllysine modification. Residue histidine 423 coordinates malonyl-CoA. The active-site Proton donor is histidine 423. Lysine 472 is subject to N6-acetyllysine. The Microbody targeting signal signature appears at 491-493 (SKL).

Homotetramer. Dimer of dimers. The two subunits within a dimer display conformational differences suggesting that at any given moment, only one of the two subunits is competent for malonyl-CoA binding and catalytic activity. Under oxidizing conditions, can form disulfide-linked homotetramers (in vitro). Associates with the peroxisomal targeting signal receptor PEX5. Acetylation at Lys-472 activates malonyl-CoA decarboxylase activity. Deacetylation at Lys-472 by SIRT4 represses activity, leading to promote lipogenesis. In terms of processing, interchain disulfide bonds may form in peroxisomes (Potential). Interchain disulfide bonds are not expected to form in the reducing environment of the cytoplasm and mitochondria. As to expression, expressed in fibroblasts and hepatoblastoma cells (at protein level). Expressed strongly in heart, liver, skeletal muscle, kidney and pancreas. Expressed in myotubes. Expressed weakly in brain, placenta, spleen, thymus, testis, ovary and small intestine.

The protein resides in the cytoplasm. It is found in the mitochondrion matrix. The protein localises to the peroxisome. Its subcellular location is the peroxisome matrix. It catalyses the reaction malonyl-CoA + H(+) = acetyl-CoA + CO2. The protein operates within metabolic intermediate biosynthesis; acetyl-CoA biosynthesis; acetyl-CoA from malonyl-CoA: step 1/1. With respect to regulation, malonyl-CoA decarboxylase activity does not require any cofactors or divalent metal ions. Formation of interchain disulfide bonds leads to positive cooperativity between active sites and increases the affinity for malonyl-CoA and the catalytic efficiency (in vitro). Functionally, catalyzes the conversion of malonyl-CoA to acetyl-CoA. In the fatty acid biosynthesis MCD selectively removes malonyl-CoA and thus assures that methyl-malonyl-CoA is the only chain elongating substrate for fatty acid synthase and that fatty acids with multiple methyl side chains are produced. In peroxisomes it may be involved in degrading intraperoxisomal malonyl-CoA, which is generated by the peroxisomal beta-oxidation of odd chain-length dicarboxylic fatty acids. Plays a role in the metabolic balance between glucose and lipid oxidation in muscle independent of alterations in insulin signaling. May play a role in controlling the extent of ischemic injury by promoting glucose oxidation. The sequence is that of Malonyl-CoA decarboxylase, mitochondrial from Homo sapiens (Human).